The following is a 90-amino-acid chain: Putative septation protein SpoVG (90 aa).

The protein belongs to the SpoVG family.

Functionally, could be involved in septation. The polypeptide is Putative septation protein SpoVG (Clostridium perfringens (strain SM101 / Type A)).